A 144-amino-acid polypeptide reads, in one-letter code: Granulocyte-macrophage colony-stimulating factor (144 aa).

An N-terminal signal peptide occupies residues 1–17; that stretch reads MWLQNLLLLGTVVCSIS. O-linked (GalNAc...) serine glycosylation occurs at Ser-24. O-linked (GalNAc...) threonine glycosylation is present at Thr-27. Asn-44, Asn-47, and Asn-54 each carry an N-linked (GlcNAc...) asparagine glycan. 2 cysteine pairs are disulfide-bonded: Cys-71–Cys-113 and Cys-105–Cys-138.

This sequence belongs to the GM-CSF family. In terms of assembly, monomer. The signaling GM-CSF receptor complex is a dodecamer of two head-to-head hexamers of two alpha, two beta, and two ligand subunits.

The protein resides in the secreted. Cytokine that stimulates the growth and differentiation of hematopoietic precursor cells from various lineages, including granulocytes, macrophages, eosinophils and erythrocytes. In Sus scrofa (Pig), this protein is Granulocyte-macrophage colony-stimulating factor (CSF2).